The following is a 247-amino-acid chain: Serine/threonine-protein phosphatase 2A activator (247 aa).

Belongs to the PTPA-type PPIase family.

The protein resides in the cytoplasm. The enzyme catalyses [protein]-peptidylproline (omega=180) = [protein]-peptidylproline (omega=0). PPIases accelerate the folding of proteins. It catalyzes the cis-trans isomerization of proline imidic peptide bonds in oligopeptides. Acts as a regulatory subunit for PP2A-like phosphatases modulating their activity or substrate specificity, probably by inducing a conformational change in the catalytic subunit, a direct target of the PPIase. Can reactivate inactive phosphatase PP2A-phosphatase methylesterase complexes (PP2Ai) in presence of ATP and Mg(2+) by dissociating the inactive form from the complex. The sequence is that of Serine/threonine-protein phosphatase 2A activator from Encephalitozoon cuniculi (strain GB-M1) (Microsporidian parasite).